The following is a 418-amino-acid chain: Light-independent protochlorophyllide reductase subunit N (418 aa).

[4Fe-4S] cluster contacts are provided by cysteine 17, cysteine 42, and cysteine 103.

The protein belongs to the BchN/ChlN family. In terms of assembly, protochlorophyllide reductase is composed of three subunits; ChlL, ChlN and ChlB. Forms a heterotetramer of two ChlB and two ChlN subunits. The cofactor is [4Fe-4S] cluster.

The catalysed reaction is chlorophyllide a + oxidized 2[4Fe-4S]-[ferredoxin] + 2 ADP + 2 phosphate = protochlorophyllide a + reduced 2[4Fe-4S]-[ferredoxin] + 2 ATP + 2 H2O. Its pathway is porphyrin-containing compound metabolism; chlorophyll biosynthesis (light-independent). Its function is as follows. Component of the dark-operative protochlorophyllide reductase (DPOR) that uses Mg-ATP and reduced ferredoxin to reduce ring D of protochlorophyllide (Pchlide) to form chlorophyllide a (Chlide). This reaction is light-independent. The NB-protein (ChlN-ChlB) is the catalytic component of the complex. In Prochlorococcus marinus (strain MIT 9211), this protein is Light-independent protochlorophyllide reductase subunit N.